An 892-amino-acid polypeptide reads, in one-letter code: Alanine--tRNA ligase (892 aa).

Zn(2+)-binding residues include His-594, His-598, Cys-702, and His-706.

Belongs to the class-II aminoacyl-tRNA synthetase family. Zn(2+) serves as cofactor.

It localises to the cytoplasm. The enzyme catalyses tRNA(Ala) + L-alanine + ATP = L-alanyl-tRNA(Ala) + AMP + diphosphate. In terms of biological role, catalyzes the attachment of alanine to tRNA(Ala) in a two-step reaction: alanine is first activated by ATP to form Ala-AMP and then transferred to the acceptor end of tRNA(Ala). Also edits incorrectly charged Ser-tRNA(Ala) and Gly-tRNA(Ala) via its editing domain. This Pyrobaculum neutrophilum (strain DSM 2338 / JCM 9278 / NBRC 100436 / V24Sta) (Thermoproteus neutrophilus) protein is Alanine--tRNA ligase.